Reading from the N-terminus, the 853-residue chain is Trimethylguanosine synthase (853 aa).

Positions 53–80 (NNSGDQATEEEEGGYSCGTAESHDSKGI) are disordered. Serine 55 bears the Phosphoserine mark. Threonine 60 is subject to Phosphothreonine. Phosphoserine occurs at positions 85, 89, 96, and 141. At tyrosine 146 the chain carries Phosphotyrosine. The disordered stretch occupies residues 149 to 187 (DDILASDDPSSIEQYENTRTYELQSKKDTETENPPVENT). Serine 154 carries the post-translational modification Phosphoserine. Polar residues predominate over residues 156-171 (DPSSIEQYENTRTYEL). Serine 189 bears the Phosphoserine mark. 2 disordered regions span residues 334–461 (SQLD…GGIP) and 527–632 (DEEA…KKVN). Low complexity predominate over residues 367 to 382 (NGGTNEESNSSGNTNT). Residues serine 412, serine 438, and serine 578 each carry the phosphoserine modification. Over residues 431–442 (DIDENPASDFDD) the composition is skewed to acidic residues. Polar residues predominate over residues 564–578 (ETNNPEPEKCQSVSS). Positions 608–619 (PDSRQAETEAEV) are enriched in basic and acidic residues. The segment covering 620–630 (KKKKNKKKNKK) has biased composition (basic residues). Residues 631-846 (VNGLPPEIAA…TITAYFGDLI (216 aa)) form a sufficient for catalytic activity region. Aspartate 719 lines the S-adenosyl-L-methionine pocket. Tryptophan 766 lines the N(7)-methylguanosine pocket.

This sequence belongs to the methyltransferase superfamily. Trimethylguanosine synthase family. In terms of assembly, may form homooligomers. Interacts with CREBBP/CBP, EED/WAIT1, EP300/P300, NCOA6/PRIP, PPARBP/PBP and SMN. Ubiquitously expressed. High expression in heart, skeletal muscle, kidney, liver and placenta.

It is found in the cytoplasm. Its subcellular location is the nucleus. It localises to the cajal body. The protein localises to the nucleolus. It catalyses the reaction a 5'-end (N(7)-methyl 5'-triphosphoguanosine)-ribonucleoside in snRNA + S-adenosyl-L-methionine = a 5'-end (N(2),N(7)-dimethyl 5'-triphosphoguanosine)-ribonucleoside in snRNA + S-adenosyl-L-homocysteine + H(+). The enzyme catalyses a 5'-end (N(7)-methyl 5'-triphosphoguanosine)-ribonucleoside in snoRNA + S-adenosyl-L-methionine = a 5'-end (N(2),N(7)-dimethyl 5'-triphosphoguanosine)-ribonucleoside in snoRNA + S-adenosyl-L-homocysteine + H(+). The catalysed reaction is a 5'-end (N(2),N(7)-dimethyl 5'-triphosphoguanosine)-ribonucleoside in snRNA + S-adenosyl-L-methionine = a 5'-end (N(2),N(2),N(7)-trimethyl 5'-triphosphoguanosine)-ribonucleoside in snRNA + S-adenosyl-L-homocysteine + H(+). It carries out the reaction a 5'-end (N(2),N(7)-dimethyl 5'-triphosphoguanosine)-ribonucleoside in snoRNA + S-adenosyl-L-methionine = a 5'-end (N(2),N(2),N(7)-trimethyl 5'-triphosphoguanosine)-ribonucleoside in snoRNA + S-adenosyl-L-homocysteine + H(+). In terms of biological role, catalyzes the 2 serial methylation steps for the conversion of the 7-monomethylguanosine (m(7)G) caps of snRNAs and snoRNAs to a 2,2,7-trimethylguanosine (m(2,2,7)G) cap structure. The enzyme is specific for guanine, and N7 methylation must precede N2 methylation. Hypermethylation of the m7G cap of U snRNAs leads to their concentration in nuclear foci, their colocalization with coilin and the formation of canonical Cajal bodies (CBs). Plays a role in transcriptional regulation. The sequence is that of Trimethylguanosine synthase (TGS1) from Homo sapiens (Human).